The following is a 508-amino-acid chain: MFS-type transporter penM (508 aa).

The segment at 1 to 60 (MKDGEETPSVDGSTSASNREKLGTDLEIGPVDLSDGGKEEKVKDPNLVDWDGPDDPENPL) is disordered. Positions 35–46 (DGGKEEKVKDPN) are enriched in basic and acidic residues. The N-linked (GlcNAc...) asparagine glycan is linked to Asn61. Residues 73-93 (SIALITFLTPLGSSMFAPGVG) form a helical membrane-spanning segment. An N-linked (GlcNAc...) asparagine glycan is attached at Asn100. 6 consecutive transmembrane segments (helical) span residues 108-128 (SFVV…IAPL), 143-163 (ILYV…SLVV), 166-186 (FFAG…IADM), 197-217 (AAWA…GAYL), 225-245 (WSFY…LFSI), and 299-319 (PIVF…YLLF). The Peroxisomal targeting signal signature appears at 293-307 (KMLFRSPIVFLLSLY). Asn331 carries an N-linked (GlcNAc...) asparagine glycan. Helical transmembrane passes span 335–355 (GAVG…LFLI), 379–399 (LPPM…YGWT), 407–427 (IVPI…FMCV), 435–457 (FTNY…GALL), and 475–495 (SLLG…WIYG).

Belongs to the major facilitator superfamily.

The protein localises to the peroxisome membrane. Its function is as follows. MFS-type transporter involved in penicillin production, most likely through the translocation of isopenicillin N from the cytosol to the peroxisomal lumen across the peroxisomal membrane. This chain is MFS-type transporter penM, found in Penicillium rubens (strain ATCC 28089 / DSM 1075 / NRRL 1951 / Wisconsin 54-1255) (Penicillium chrysogenum).